A 352-amino-acid chain; its full sequence is MTELELLGPRASGDALGTAVLKAVAEDFQVDEVLDIPLSGQGEHLWLWVEKRDLNTEEAARRLARAAGVPARSISYAGLKDRQALTRQWFSLHLPGKADPDLSRAEDETLRVLKQVRHQRKLQRGAHSANGFTLRLTGLQADHPALDARLEQLKQQGVPNYFGAQRFGHAGGNVHDALDWATRQALPEQRNVRSRLLSAARSYLFNQVLAARVADGSWQHAQVGDLLAFTDSRSFFAAGEAECSDPRLAILDLHPTGPLWGEGPAPGGGTPQALETEVGARHPQLCQWLARAGMDHERRILRLPIGRLTWHYPEPDILQLEFVLPAGCFATVVVRELVDLVPAGQTDSPCVF.

The active-site Nucleophile is Asp-81. The TRUD domain occupies 157-303 (GVPNYFGAQR…MDHERRILRL (147 aa)).

This sequence belongs to the pseudouridine synthase TruD family.

It catalyses the reaction uridine(13) in tRNA = pseudouridine(13) in tRNA. In terms of biological role, responsible for synthesis of pseudouridine from uracil-13 in transfer RNAs. This is tRNA pseudouridine synthase D from Pseudomonas entomophila (strain L48).